The primary structure comprises 198 residues: Myb-related protein 340 (198 aa).

HTH myb-type domains follow at residues D10–L62 and R63–H117. 2 consecutive DNA-binding regions (H-T-H motif) follow at residues W38 to L62 and W90 to R113.

In terms of tissue distribution, expressed only in flowers.

It is found in the nucleus. Transcription factor. This Antirrhinum majus (Garden snapdragon) protein is Myb-related protein 340.